Here is a 305-residue protein sequence, read N- to C-terminus: MGDETIKVAILGSGNIGTDLMYKLLDHPGSMELVLLAGIDPHSEGLARARSLGVATSDQGIAAVLERPEIQIVFDATSAKAHVRHAKLLHETGRIAIDLTPAARGPYVVPPVNLTQHLDALNVNLITCGGQATIPLVYAVSRVTPVCYAEIVSTVASRSAGPGTRQNIDEFTFTTAHGLEVIGGAQQGKAIIILNPAEPPILMRNTVYAIPAGDFDPAQVRDSIEAIVAEVQQYVPGYRLTNPPVFNMRETPWGRKPVVTALLEVEGAGHFLPTYAGNLDIMTASARRVGEVFAQQLLSRREVLV.

13–16 is an NAD(+) binding site; sequence SGNI. The active-site Acyl-thioester intermediate is cysteine 128. Residues 159-167 and asparagine 278 each bind NAD(+); that span reads SAGPGTRQN.

It belongs to the acetaldehyde dehydrogenase family.

The catalysed reaction is acetaldehyde + NAD(+) + CoA = acetyl-CoA + NADH + H(+). The protein is Acetaldehyde dehydrogenase of Roseiflexus sp. (strain RS-1).